Reading from the N-terminus, the 368-residue chain is Agmatine deiminase (368 aa).

The active-site Amidino-cysteine intermediate is Cys-357.

It belongs to the agmatine deiminase family. As to quaternary structure, homodimer.

The catalysed reaction is agmatine + H2O = N-carbamoylputrescine + NH4(+). Its pathway is amine and polyamine biosynthesis; putrescine biosynthesis via agmatine pathway; N-carbamoylputrescine from agmatine: step 1/1. In terms of biological role, mediates the hydrolysis of agmatine into N-carbamoylputrescine in the arginine decarboxylase (ADC) pathway of putrescine biosynthesis, a basic polyamine. The polypeptide is Agmatine deiminase (Stutzerimonas stutzeri (strain A1501) (Pseudomonas stutzeri)).